Consider the following 669-residue polypeptide: Dymeclin (669 aa).

Residue glycine 2 is the site of N-myristoyl glycine attachment.

This sequence belongs to the dymeclin family. As to quaternary structure, interacts with GOLM1 and PPIB. Post-translationally, myristoylated in vitro; myristoylation is not essential for protein targeting to Golgi compartment.

It localises to the cytoplasm. The protein resides in the golgi apparatus. It is found in the membrane. Its function is as follows. Necessary for correct organization of Golgi apparatus. Involved in bone development. The polypeptide is Dymeclin (Dym) (Mus musculus (Mouse)).